Consider the following 275-residue polypeptide: Melanoma-associated antigen B5 (275 aa).

Residues 1–33 (MTSAGVFNAGSDERANSRDEEYPCSSEVSPSTE) are disordered. Residues 11 to 21 (SDERANSRDEE) show a composition bias toward basic and acidic residues. Residues 23–33 (PCSSEVSPSTE) show a composition bias toward low complexity. The region spanning 40 to 239 (INIKVGLLEQ…GAFSSQYEEA (200 aa)) is the MAGE domain.

As to expression, expressed in testis. Not expressed in other normal tissues, but is expressed in tumors of different histological origins.

The chain is Melanoma-associated antigen B5 (MAGEB5) from Homo sapiens (Human).